The primary structure comprises 501 residues: DNA nucleotidylexotransferase (501 aa).

A Nuclear localization signal motif is present at residues 11–17 (KKRKRPV). Residues 24–121 (QVEVKFKEVT…RPVRVETRHS (98 aa)) form the BRCT domain. The tract at residues 249 to 253 (VGPKT) is involved in DNA binding. Residues 324–329 (GFRRGK) and 333–336 (HDVD) each bind a 2'-deoxyribonucleoside 5'-triphosphate. Asp-334, Asp-336, and Asp-426 together coordinate Mg(2+). Residue 441-442 (GW) coordinates a 2'-deoxyribonucleoside 5'-triphosphate.

This sequence belongs to the DNA polymerase type-X family. Mg(2+) serves as cofactor.

It localises to the nucleus. It carries out the reaction DNA(n) + a 2'-deoxyribonucleoside 5'-triphosphate = DNA(n+1) + diphosphate. In terms of biological role, template-independent DNA polymerase which catalyzes the random addition of deoxynucleoside 5'-triphosphate to the 3'-end of a DNA initiator. One of the in vivo functions of this enzyme is the addition of nucleotides at the junction (N region) of rearranged Ig heavy chain and T-cell receptor gene segments during the maturation of B- and T-cells. The sequence is that of DNA nucleotidylexotransferase (dntt) from Oncorhynchus mykiss (Rainbow trout).